Here is a 182-residue protein sequence, read N- to C-terminus: Helofensin-3 (182 aa).

An N-terminal signal peptide occupies residues 1–26 (MQMDWLFIAVISGIGLLSSGVPGTQG). A C(6)C(4)C(9)C(6)CC 1; approximate repeat occupies 27-64 (AYTTEQCRALNGSCNFYACFPKNVIIGKCDWWGWSCCA). The C(6)C(4)C(9)C(6)CC 2; approximate repeat unit spans residues 65-101 (RTPLERCTAKKGTCTKTGCTKTDTDHGPCDGGAQCCQ). A C(6)C(4)C(9)C(6)CC 3; approximate repeat occupies 102 to 138 (RDPVKYCKFHGNVCGRGKCPMDHIPIGECTPGYPCCK). One copy of the C(6)C(4)C(9)C(6)CC 4; approximate repeat lies at 139–176 (RDGPAYCKSKGGKCLNRCPQIVPTNVIGVCATGVPCCK).

This sequence belongs to the beta-defensin family. Helofensin subfamily. As to expression, expressed by the mandibular venom gland.

The protein localises to the secreted. In terms of biological role, lethal toxin which possesses an inhibitory effect on direct electrical stimulation of the isolated hemi-diaphragm of mice. Neither hemorrhagic nor hemolytic activities are detected. Phospholipase A2 activity, proteolytic activity and arginine esterolytic activity are absent. This chain is Helofensin-3, found in Heloderma suspectum cinctum (Banded Gila monster).